Consider the following 961-residue polypeptide: Integrator complex subunit 7 (961 aa).

Residues 937 to 955 (QVRLQQQQGQPPSQQQQQR) show a composition bias toward low complexity. The segment at 937–961 (QVRLQQQQGQPPSQQQQQRTAYSRF) is disordered.

It belongs to the Integrator subunit 7 family. As to quaternary structure, component of the Integrator complex, composed of core subunits INTS1, INTS2, INTS3, INTS4, INTS5, INTS6, INTS7, INTS8, INTS9/RC74, INTS10, INTS11/CPSF3L, INTS12, INTS13, INTS14 and INTS15. The core complex associates with protein phosphatase 2A subunits PPP2CA and PPP2R1A, to form the Integrator-PP2A (INTAC) complex.

It localises to the nucleus. It is found in the chromosome. The protein localises to the cytoplasm. Its function is as follows. Component of the integrator complex, a multiprotein complex that terminates RNA polymerase II (Pol II) transcription in the promoter-proximal region of genes. The integrator complex provides a quality checkpoint during transcription elongation by driving premature transcription termination of transcripts that are unfavorably configured for transcriptional elongation: the complex terminates transcription by (1) catalyzing dephosphorylation of the C-terminal domain (CTD) of Pol II subunit POLR2A/RPB1 and SUPT5H/SPT5, (2) degrading the exiting nascent RNA transcript via endonuclease activity and (3) promoting the release of Pol II from bound DNA. The integrator complex is also involved in terminating the synthesis of non-coding Pol II transcripts, such as enhancer RNAs (eRNAs), small nuclear RNAs (snRNAs), telomerase RNAs and long non-coding RNAs (lncRNAs). The chain is Integrator complex subunit 7 (INTS7) from Gallus gallus (Chicken).